The chain runs to 833 residues: Leucine--tRNA ligase (833 aa).

A 'HIGH' region motif is present at residues 41 to 52 (PYPSGAGLHVGH). A 'KMSKS' region motif is present at residues 610–614 (KMSKS). ATP is bound at residue Lys-613.

This sequence belongs to the class-I aminoacyl-tRNA synthetase family.

The protein localises to the cytoplasm. It carries out the reaction tRNA(Leu) + L-leucine + ATP = L-leucyl-tRNA(Leu) + AMP + diphosphate. The protein is Leucine--tRNA ligase of Streptococcus pyogenes serotype M49 (strain NZ131).